The following is a 106-amino-acid chain: L-rhamnose mutarotase (106 aa).

Tyr20 is a binding site for substrate. Residue His24 is the Proton donor of the active site. Residues Tyr43 and 78–79 (WW) each bind substrate.

The protein belongs to the rhamnose mutarotase family. Homodimer.

The protein localises to the cytoplasm. The catalysed reaction is alpha-L-rhamnose = beta-L-rhamnose. The protein operates within carbohydrate metabolism; L-rhamnose metabolism. Involved in the anomeric conversion of L-rhamnose. The sequence is that of L-rhamnose mutarotase from Brucella anthropi (strain ATCC 49188 / DSM 6882 / CCUG 24695 / JCM 21032 / LMG 3331 / NBRC 15819 / NCTC 12168 / Alc 37) (Ochrobactrum anthropi).